The chain runs to 82 residues: uncharacterized protein (82 aa).

Helical transmembrane passes span 8–28 (LTTA…LPAP) and 50–70 (LYTL…YFVL).

The protein localises to the cell membrane. This is an uncharacterized protein from Escherichia coli (strain K12).